Reading from the N-terminus, the 63-residue chain is Large ribosomal subunit protein bL28 (63 aa).

Belongs to the bacterial ribosomal protein bL28 family.

The sequence is that of Large ribosomal subunit protein bL28 from Desulfatibacillum aliphaticivorans.